The chain runs to 379 residues: Alcohol dehydrogenase 1 (379 aa).

The Zn(2+) site is built by C47, T49, H69, C99, C102, C105, C113, and C177. Residues T49 and H69 each coordinate an alcohol. T49 is an NAD(+) binding site. NAD(+)-binding positions include 202–207 (GLGAVG), D226, R231, T272, V295, 295–297 (VGV), F322, and R372.

The protein belongs to the zinc-containing alcohol dehydrogenase family. Homodimer. Zn(2+) is required as a cofactor.

The protein resides in the cytoplasm. It carries out the reaction a primary alcohol + NAD(+) = an aldehyde + NADH + H(+). The enzyme catalyses a secondary alcohol + NAD(+) = a ketone + NADH + H(+). This chain is Alcohol dehydrogenase 1 (ADH1), found in Zea mays (Maize).